The primary structure comprises 317 residues: Olfactory receptor 1B1 (317 aa).

The Extracellular segment spans residues 1–29; it reads MSFAPNASHSPVFLLLGFSRANISYTLLF. 2 N-linked (GlcNAc...) asparagine glycosylation sites follow: N6 and N22. The helical transmembrane segment at 30-50 threads the bilayer; it reads FLFLAIYLTTILGNVTLVLLI. Over 51-66 the chain is Cytoplasmic; it reads SWDSRLHSPMYYLLRG. Residues 67–87 form a helical membrane-spanning segment; that stretch reads LSVIDMGLSTVTLPQLLAHLV. Over 88-98 the chain is Extracellular; that stretch reads SHYPTIPAARC. C98 and C184 form a disulfide bridge. A helical membrane pass occupies residues 99–119; that stretch reads LAQFFFFYAFGVTDTLVIAVM. The Cytoplasmic portion of the chain corresponds to 120-144; it reads ALDRYVAICDPLHYALVMNHQRCAC. A helical membrane pass occupies residues 145–165; it reads LLALSWVVSILHTMLRVGLVL. Residues 166–201 lie on the Extracellular side of the membrane; that stretch reads PLCWTGDAGGNVNLPHFFCDHRPLLRASCSDIHSNE. A helical transmembrane segment spans residues 202–222; sequence LAIFFEGGFLMLGPCALIVLS. The Cytoplasmic portion of the chain corresponds to 223-248; it reads YVRIGAAILRLPSAAGRRRAVSTCGS. A helical transmembrane segment spans residues 249–269; it reads HLTMVGFLYGTIICVYFQPPF. The Extracellular segment spans residues 270–276; it reads QNSQYQD. Residues 277–297 traverse the membrane as a helical segment; that stretch reads MVASVMYTAITPLANPFVYSL. Residues 298–317 lie on the Cytoplasmic side of the membrane; the sequence is HNKDVKGALCRLLEWVKVDP.

Belongs to the G-protein coupled receptor 1 family.

It is found in the cell membrane. In terms of biological role, odorant receptor. The chain is Olfactory receptor 1B1 (OR1B1) from Homo sapiens (Human).